A 305-amino-acid polypeptide reads, in one-letter code: uncharacterized protein (305 aa).

A disordered region spans residues 208–236 (SYAQSPAVKKKKWRHSGGKKNNPRENHID). Residues 215 to 225 (VKKKKWRHSGG) are compositionally biased toward basic residues.

This is an uncharacterized protein from Bacillus subtilis (strain 168).